Consider the following 195-residue polypeptide: ATP-dependent Clp protease proteolytic subunit (195 aa).

The active-site Nucleophile is serine 98. Histidine 123 is an active-site residue.

Belongs to the peptidase S14 family. In terms of assembly, fourteen ClpP subunits assemble into 2 heptameric rings which stack back to back to give a disk-like structure with a central cavity, resembling the structure of eukaryotic proteasomes.

Its subcellular location is the cytoplasm. The catalysed reaction is Hydrolysis of proteins to small peptides in the presence of ATP and magnesium. alpha-casein is the usual test substrate. In the absence of ATP, only oligopeptides shorter than five residues are hydrolyzed (such as succinyl-Leu-Tyr-|-NHMec, and Leu-Tyr-Leu-|-Tyr-Trp, in which cleavage of the -Tyr-|-Leu- and -Tyr-|-Trp bonds also occurs).. Functionally, cleaves peptides in various proteins in a process that requires ATP hydrolysis. Has a chymotrypsin-like activity. Plays a major role in the degradation of misfolded proteins. In Staphylococcus aureus (strain Mu3 / ATCC 700698), this protein is ATP-dependent Clp protease proteolytic subunit.